The chain runs to 126 residues: Probable glycine cleavage system H protein (126 aa).

A Lipoyl-binding domain is found at 24-106 (VVRVGITDFA…FGDGWLLEVE (83 aa)). At Lys-65 the chain carries N6-lipoyllysine.

This sequence belongs to the GcvH family. In terms of assembly, the glycine cleavage system is composed of four proteins: P, T, L and H. The cofactor is (R)-lipoate.

Its function is as follows. The glycine cleavage system catalyzes the degradation of glycine. The H protein shuttles the methylamine group of glycine from the P protein to the T protein. This is Probable glycine cleavage system H protein from Natronomonas pharaonis (strain ATCC 35678 / DSM 2160 / CIP 103997 / JCM 8858 / NBRC 14720 / NCIMB 2260 / Gabara) (Halobacterium pharaonis).